The following is a 329-amino-acid chain: Mo25-like protein (329 aa).

Belongs to the Mo25 family.

This is Mo25-like protein (pmo25) from Schizosaccharomyces pombe (strain 972 / ATCC 24843) (Fission yeast).